Consider the following 478-residue polypeptide: Amino acid oxidase imqH (478 aa).

An N-terminal signal peptide occupies residues 1–22; sequence MPAPKSIIIVGSGVFGLSTAHA. Positions 14, 15, 38, 53, 57, 58, 63, and 64 each coordinate FAD. N-linked (GlcNAc...) asparagine glycans are attached at residues Asn-97 and Asn-167. Residue Val-208 coordinates FAD. The residue at position 399 (Cys-399) is an S-8alpha-FAD cysteine. Phe-432 and Lys-433 together coordinate FAD.

This sequence belongs to the MSOX/MTOX family. As to quaternary structure, dimer. FAD serves as cofactor.

It functions in the pathway secondary metabolite biosynthesis. Its function is as follows. Nonribosomal peptide synthetase; part of the gene cluster that mediates the biosynthesis of imizoquins A to D, tripeptide-derived alkaloids that serve a protective role against oxidative stress that are essential for normal germination. ImqB is a canonical three-module NRPS that assembles the tripeptide backbone of the imizoquins via condensation of Trp, Tyr, and Leu-derived precursors. N-methylation by imqF and phenol oxidation by imqC, followed by cyclization via the FAD-dependent oxidase imqH carry out the three-step transformation of L-tyrosine into tetrahydroisoquinoline. Importantly, this sequence requires the presence of a free amine in the tyrosine moiety, indicating that isoquinoline formation occurs prior to peptide bond formation. The imidazolidin-4-one ring of imizoquins could form following additional oxidation of the methyl-derived bridgehead carbon by imqH. Lastly, O-methylation by imqG and leucine hydroxylation by imqE complete biosynthesis of the imizoquins. In Aspergillus flavus (strain ATCC 200026 / FGSC A1120 / IAM 13836 / NRRL 3357 / JCM 12722 / SRRC 167), this protein is Amino acid oxidase imqH.